A 385-amino-acid chain; its full sequence is MNPVPAQREYFLDSIRAWLMLLGIPFHISLIYSSHTWHVNSTEPSLWLTLFNDFIHSFRMQVFFVISGYFSYMLFLRYPLKKWWKVRVERVGIPMLTAIPLLTLPQFIMLQYVKGKTKSWPGLSLYDKYNTLAWELISHLWFLLVLVVMTTLCVWIFKRIRNNLENSDKTNKKFSMVKLSVIFLCLGIGYAVIRRTIFIVYPPILSNGMFNFIVMQTLFYLPFFILGALAFIFPHLKALFTTPSRGCTLAAALAFVAYLLNQRYGSGDAWMYETESVITMVLGLWMVNVVFSFGHRLLNFQSARVTYFVNASLFIYLVHHPLTLFFGAYITPHITSNWLGFLCGLIFVVGIAIILYEIHLRIPLLKFLFSGKPVVKRENDKAPAR.

The next 10 helical transmembrane spans lie at 17–37 (AWLM…SHTW), 60–80 (MQVF…RYPL), 91–111 (VGIP…IMLQ), 137–157 (ISHL…VWIF), 173–193 (KFSM…YAVI), 212–232 (FIVM…LAFI), 239–259 (LFTT…VAYL), 274–294 (TESV…FSFG), 311–331 (ASLF…AYIT), and 338–358 (WLGF…LYEI).

This sequence belongs to the acyltransferase 3 family. OpgC subfamily.

Its subcellular location is the cell membrane. It participates in glycan metabolism; osmoregulated periplasmic glucan (OPG) biosynthesis. Its function is as follows. Necessary for the succinyl substitution of periplasmic glucans. Could catalyze the transfer of succinyl residues from the cytoplasmic side of the membrane to the nascent glucan backbones on the periplasmic side of the membrane. In Shigella dysenteriae serotype 1 (strain Sd197), this protein is Glucans biosynthesis protein C.